Consider the following 291-residue polypeptide: Undecaprenyl-diphosphatase 2 (291 aa).

6 helical membrane-spanning segments follow: residues 39 to 59 (PGAA…LIYF), 85 to 105 (ARMG…GLTL), 118 to 138 (ITAT…RMAA), 198 to 218 (AARY…VFEL), 231 to 251 (PTLF…AWFM), and 262 to 282 (FVWY…VGVL).

This sequence belongs to the UppP family.

Its subcellular location is the cell membrane. The enzyme catalyses di-trans,octa-cis-undecaprenyl diphosphate + H2O = di-trans,octa-cis-undecaprenyl phosphate + phosphate + H(+). In terms of biological role, catalyzes the dephosphorylation of undecaprenyl diphosphate (UPP). Confers resistance to bacitracin. The polypeptide is Undecaprenyl-diphosphatase 2 (Streptomyces coelicolor (strain ATCC BAA-471 / A3(2) / M145)).